A 211-amino-acid chain; its full sequence is Probable calcium-binding protein CML11 (211 aa).

Disordered regions lie at residues 1 to 22 (MSEPATTTPTPTPAGDHDAAAT) and 40 to 60 (SCSAQQQQQQQQQQEEPLGDD). Residues 44–53 (QQQQQQQQQQ) show a composition bias toward low complexity. EF-hand domains lie at 60-95 (DQLGELREIFRSFDRNGDGSLTQLELGSLLRSLGLK), 96-131 (PSTDELDSLIQRADTNSNGLIEFSEFVALVAPELLY), 136-171 (YSEDQIRRLFNIFDRDGNGFITAAELAHSMAKLGHA), and 172-207 (LTVKELTGMIKEADTDGDGRISFQEFSRAITAAAFD). Ca(2+) is bound by residues Asp73, Asn75, Asp77, Ser79, Glu84, Asp109, Asn111, Asn113, Glu120, Asp149, Asp151, Asn153, Glu160, Asp185, Asp187, Asp189, Arg191, and Glu196.

Functionally, potential calcium sensor. The chain is Probable calcium-binding protein CML11 (CML11) from Oryza sativa subsp. japonica (Rice).